The primary structure comprises 113 residues: Hydrogenase maturation factor HypA (113 aa).

Histidine 2 is a binding site for Ni(2+). Zn(2+) contacts are provided by cysteine 73, cysteine 76, cysteine 89, and cysteine 92.

Belongs to the HypA/HybF family.

In terms of biological role, involved in the maturation of [NiFe] hydrogenases. Required for nickel insertion into the metal center of the hydrogenase. This chain is Hydrogenase maturation factor HypA, found in Cereibacter sphaeroides (Rhodobacter sphaeroides).